The chain runs to 247 residues: Probable dihydroorotate dehydrogenase B (NAD(+)), electron transfer subunit (247 aa).

Residues 1-87 (MLRRVSIEET…RGPYGHGFSG (87 aa)) enclose the FAD-binding FR-type domain. [2Fe-2S] cluster-binding residues include Cys201, Cys206, Cys209, and Cys217.

The protein belongs to the PyrK family. In terms of assembly, heterotetramer of 2 PyrK and 2 PyrD type B subunits. It depends on [2Fe-2S] cluster as a cofactor. Requires FAD as cofactor.

It participates in pyrimidine metabolism; UMP biosynthesis via de novo pathway; orotate from (S)-dihydroorotate (NAD(+) route): step 1/1. In terms of biological role, responsible for channeling the electrons from the oxidation of dihydroorotate from the FMN redox center in the PyrD type B subunit to the ultimate electron acceptor NAD(+). The sequence is that of Probable dihydroorotate dehydrogenase B (NAD(+)), electron transfer subunit from Pyrococcus furiosus (strain ATCC 43587 / DSM 3638 / JCM 8422 / Vc1).